The sequence spans 349 residues: MENIETILRLAEEKILLVQNLKALQEYKVEFLGKNGIVTGELKKLGSLNEQERKEFGLKINKLKDKIQNIIRATEEILEEQELKLKLAADKIDLTIPARRYKQGSIHPITQCSEELIQVFSQFGFTIENGPNIENDFHNFTALNFEDDHPARQMHDTFYLKGQENNKPLLLRTHTSTVQIRAMKSGKPPFRFIAPGRTYRSDSDMTHTPMFHQIEGLVIDKNINMGHLKYVITEFIKNFFENSNIELRFRPSFFPFTEPSAEVDIRMNKHDKWLEVLGCGMVHPNVLKNVGIDSSEYQGVAFGLGVERFAMLKYNIKDLRQFFEGDMRWLKHYNFGSFDIPSLAGGLTK.

Glu-258 is a binding site for Mg(2+).

The protein belongs to the class-II aminoacyl-tRNA synthetase family. Phe-tRNA synthetase alpha subunit type 1 subfamily. In terms of assembly, tetramer of two alpha and two beta subunits. Mg(2+) is required as a cofactor.

It is found in the cytoplasm. The catalysed reaction is tRNA(Phe) + L-phenylalanine + ATP = L-phenylalanyl-tRNA(Phe) + AMP + diphosphate + H(+). In Rickettsia akari (strain Hartford), this protein is Phenylalanine--tRNA ligase alpha subunit.